The chain runs to 494 residues: 3-octaprenyl-4-hydroxybenzoate carboxy-lyase (494 aa).

Position 172 (N172) interacts with Mn(2+). Prenylated FMN contacts are provided by residues I175–R177, R189–L191, and R194–G195. Residue E238 participates in Mn(2+) binding. The Proton donor role is filled by D287.

Belongs to the UbiD family. As to quaternary structure, homohexamer. Requires prenylated FMN as cofactor. The cofactor is Mn(2+).

The protein localises to the cell membrane. The catalysed reaction is a 4-hydroxy-3-(all-trans-polyprenyl)benzoate + H(+) = a 2-(all-trans-polyprenyl)phenol + CO2. Its pathway is cofactor biosynthesis; ubiquinone biosynthesis. Its function is as follows. Catalyzes the decarboxylation of 3-octaprenyl-4-hydroxy benzoate to 2-octaprenylphenol, an intermediate step in ubiquinone biosynthesis. This chain is 3-octaprenyl-4-hydroxybenzoate carboxy-lyase, found in Cronobacter sakazakii (strain ATCC BAA-894) (Enterobacter sakazakii).